The following is a 252-amino-acid chain: Large ribosomal subunit protein uL29m (252 aa).

Lys-146 carries the N6-acetyllysine modification. The span at 230-240 (KKKEKILHAKF) shows a compositional bias: basic residues. Residues 230-252 (KKKEKILHAKFPHLSQERKSSSV) form a disordered region.

It belongs to the universal ribosomal protein uL29 family. Component of the mitochondrial ribosome large subunit (39S) which comprises a 16S rRNA and about 50 distinct proteins.

It localises to the mitochondrion. This Mus musculus (Mouse) protein is Large ribosomal subunit protein uL29m (Mrpl47).